A 544-amino-acid polypeptide reads, in one-letter code: Probable protein kinase UbiB (544 aa).

Positions 123–504 constitute a Protein kinase domain; that stretch reads DFDENALASA…QRWQKKMFVL (382 aa). Residues 129–137 and lysine 155 contribute to the ATP site; that span reads LASASIAQV. The active-site Proton acceptor is the aspartate 290. Helical transmembrane passes span 501–521 and 523–543; these read MFVL…FAAL and LAIS…GFLL.

It belongs to the ABC1 family. UbiB subfamily.

It is found in the cell inner membrane. The protein operates within cofactor biosynthesis; ubiquinone biosynthesis [regulation]. Its function is as follows. Is probably a protein kinase regulator of UbiI activity which is involved in aerobic coenzyme Q (ubiquinone) biosynthesis. This chain is Probable protein kinase UbiB, found in Histophilus somni (strain 129Pt) (Haemophilus somnus).